The chain runs to 293 residues: Probable rRNA-processing protein EBP2 homolog (293 aa).

Over residues 1 to 37 (MSLEEDIVSDDEMNMIDEDDATDSEAESLSDSDTENE) the composition is skewed to acidic residues. Disordered regions lie at residues 1–45 (MSLE…LAEP) and 150–293 (IEES…RQKR). Residues 135–190 (HMEKVKSRLLHEKKQIEESEERRKARDNKRMAKEVQSQKMKERAKEKKDNIESVKK) are a coiled coil. Basic and acidic residues-rich tracts occupy residues 150–167 (IEES…RMAK), 173–189 (KMKE…ESVK), and 247–256 (KKREFRDSKF). Residues 265-275 (SKQNTAETTND) show a composition bias toward polar residues.

It belongs to the EBP2 family. As to quaternary structure, interacts with NSN1.

It is found in the nucleus. It localises to the nucleolus. Its function is as follows. Required for the processing of the 27S pre-rRNA. Plays an important role in plant growth and senescence by modulating ribosome biogenesis in nucleolus. Associates with ribosomes. In Arabidopsis thaliana (Mouse-ear cress), this protein is Probable rRNA-processing protein EBP2 homolog.